Reading from the N-terminus, the 198-residue chain is 7-methyl-GTP pyrophosphatase (198 aa).

Residue aspartate 75 is the Proton acceptor of the active site.

It belongs to the Maf family. YceF subfamily. It depends on a divalent metal cation as a cofactor.

Its subcellular location is the cytoplasm. The catalysed reaction is N(7)-methyl-GTP + H2O = N(7)-methyl-GMP + diphosphate + H(+). In terms of biological role, nucleoside triphosphate pyrophosphatase that hydrolyzes 7-methyl-GTP (m(7)GTP). May have a dual role in cell division arrest and in preventing the incorporation of modified nucleotides into cellular nucleic acids. The sequence is that of 7-methyl-GTP pyrophosphatase from Bartonella quintana (strain Toulouse) (Rochalimaea quintana).